Here is a 215-residue protein sequence, read N- to C-terminus: 3-demethoxyubiquinol 3-hydroxylase (215 aa).

The segment at 26 to 47 (PSSAHSQRPSPAVVQPEHKMSE) is disordered. Positions 64, 94, 97, 146, 178, and 181 each coordinate Fe cation.

Belongs to the COQ7 family. Fe cation serves as cofactor.

It is found in the cell membrane. It catalyses the reaction a 5-methoxy-2-methyl-3-(all-trans-polyprenyl)benzene-1,4-diol + AH2 + O2 = a 3-demethylubiquinol + A + H2O. It participates in cofactor biosynthesis; ubiquinone biosynthesis. In terms of biological role, catalyzes the hydroxylation of 2-nonaprenyl-3-methyl-6-methoxy-1,4-benzoquinol during ubiquinone biosynthesis. The protein is 3-demethoxyubiquinol 3-hydroxylase of Pseudomonas syringae pv. syringae (strain B728a).